We begin with the raw amino-acid sequence, 461 residues long: Chromosomal replication initiator protein DnaA (461 aa).

The interval 1 to 90 is domain I, interacts with DnaA modulators; it reads MAVSLWQQCI…RPSARPVAPA (90 aa). The interval 91-124 is domain II; that stretch reads PVAAKPVNRQTKAQVGTTSFNTQAEPIINPNHRS. The interval 125 to 341 is domain III, AAA+ region; that stretch reads NINPTYQFDN…GALNRVIANA (217 aa). Residues G169, G171, K172, and T173 each coordinate ATP. A domain IV, binds dsDNA region spans residues 342-461; that stretch reads NFTGRPITID…YANLIRTLSS (120 aa).

Belongs to the DnaA family. In terms of assembly, oligomerizes as a right-handed, spiral filament on DNA at oriC.

The protein localises to the cytoplasm. Functionally, plays an essential role in the initiation and regulation of chromosomal replication. ATP-DnaA binds to the origin of replication (oriC) to initiate formation of the DNA replication initiation complex once per cell cycle. Binds the DnaA box (a 9 base pair repeat at the origin) and separates the double-stranded (ds)DNA. Forms a right-handed helical filament on oriC DNA; dsDNA binds to the exterior of the filament while single-stranded (ss)DNA is stabiized in the filament's interior. The ATP-DnaA-oriC complex binds and stabilizes one strand of the AT-rich DNA unwinding element (DUE), permitting loading of DNA polymerase. After initiation quickly degrades to an ADP-DnaA complex that is not apt for DNA replication. Binds acidic phospholipids. This is Chromosomal replication initiator protein DnaA from Shewanella frigidimarina (strain NCIMB 400).